The chain runs to 65 residues: MPKLKTKSAVKKRFSLTGTGKIKVKVAYKSHLLSNKGTKMKRQARGTFILCDADQRIVKKFMPYG.

It belongs to the bacterial ribosomal protein bL35 family.

The protein is Large ribosomal subunit protein bL35 of Rhodospirillum rubrum (strain ATCC 11170 / ATH 1.1.1 / DSM 467 / LMG 4362 / NCIMB 8255 / S1).